We begin with the raw amino-acid sequence, 310 residues long: Small ribosomal subunit protein uS2 (310 aa).

Disordered stretches follow at residues 213 to 240 (EEQAALARQQEEANAGTTAGFSEWGGAA) and 271 to 310 (WDSVAPGATDDWGAEPAAPSSDWGTAVTMQEQAKPSTDWA). Positions 216–227 (AALARQQEEANA) are enriched in low complexity. Polar residues predominate over residues 297–310 (VTMQEQAKPSTDWA).

It belongs to the universal ribosomal protein uS2 family. As to quaternary structure, component of the small ribosomal subunit. Mature ribosomes consist of a small (40S) and a large (60S) subunit. The 40S subunit contains about 33 different proteins and 1 molecule of RNA (18S). The 60S subunit contains about 49 different proteins and 3 molecules of RNA (28S, 5.8S and 5S). Interacts with ribosomal protein S21.

Its subcellular location is the cytoplasm. Its function is as follows. Required for the assembly and/or stability of the 40S ribosomal subunit. Required for the processing of the 20S rRNA-precursor to mature 18S rRNA in a late step of the maturation of 40S ribosomal subunits. The sequence is that of Small ribosomal subunit protein uS2 from Nematostella vectensis (Starlet sea anemone).